The following is a 538-amino-acid chain: Putative cysteine ligase BshC (538 aa).

Residues 248 to 268 (ISKYKEVQEGLRNQQEVIKEL) adopt a coiled-coil conformation.

This sequence belongs to the BshC family.

Functionally, involved in bacillithiol (BSH) biosynthesis. May catalyze the last step of the pathway, the addition of cysteine to glucosamine malate (GlcN-Mal) to generate BSH. This Bacillus cereus (strain ATCC 14579 / DSM 31 / CCUG 7414 / JCM 2152 / NBRC 15305 / NCIMB 9373 / NCTC 2599 / NRRL B-3711) protein is Putative cysteine ligase BshC.